Consider the following 367-residue polypeptide: Germination protease (367 aa).

A propeptide spanning residues 1–15 is cleaved from the precursor; that stretch reads MKEPLDLSKYSVRTD.

It belongs to the peptidase A25 family. As to quaternary structure, homotetramer. Post-translationally, autoproteolytically processed. The inactive tetrameric zymogen termed p46 autoprocesses to a smaller form termed p41, which is active only during spore germination.

The catalysed reaction is Endopeptidase action with P4 Glu or Asp, P1 preferably Glu &gt; Asp, P1' hydrophobic and P2' Ala.. Its function is as follows. Initiates the rapid degradation of small, acid-soluble proteins during spore germination. In Bacillus mycoides (strain KBAB4) (Bacillus weihenstephanensis), this protein is Germination protease.